The following is a 507-amino-acid chain: MFHLLIYPLWVLVALFAVIIANLLYQQLPRRPDEPPLVFHWFPFFGNAVAYGLDPCGFFEKCREKHGDVFTFILFGRKIVACLGVDGNDFVLNSRLQDANAEEVYGPLTIPVFGSDVVYDCPNSKLMEQKKFVKFGLTQKALESHVQLIEREVLDYVETDPSFSGRTSTIDVPKAMAEITIFTASRSLQGEEVRRKLTAEFAALYHDLDLGFRPVNFLFPWLPLPHNRKRDAAHIKMREVYMDIINDRRKGGIRTEDGTDMIANLMGCTYKNGQPVPDKEIAHMMITLLMAGQHSSSSASSWIVLHLASSPDITEELYQEQLVNLSVNGALPPLQYSDLDKLPLLQNVVKETLRVHSSIHSILRKVKRPMQVPNSPYTITTDKVIMASPTVTAMSEEYFENAKTWNPHRWDNRAKEEVDTEDVIDYGYGAVSKGTKSPYLPFGAGRHRCIGEKFAYVNLGVIVATLVRNFRLSTIDGRPGVPETDYTSLFSRPAQPAFIRWERRKKI.

Residues 7–29 (YPLWVLVALFAVIIANLLYQQLP) traverse the membrane as a helical segment. Residue Tyr105 participates in lanosterol binding. Cys449 contacts heme.

Belongs to the cytochrome P450 family. It depends on heme as a cofactor.

Its subcellular location is the endoplasmic reticulum membrane. The enzyme catalyses a 14alpha-methyl steroid + 3 reduced [NADPH--hemoprotein reductase] + 3 O2 = a Delta(14) steroid + formate + 3 oxidized [NADPH--hemoprotein reductase] + 4 H2O + 4 H(+). It catalyses the reaction a 14alpha-methyl steroid + reduced [NADPH--hemoprotein reductase] + O2 = a 14alpha-hydroxymethyl steroid + oxidized [NADPH--hemoprotein reductase] + H2O + H(+). The catalysed reaction is a 14alpha-hydroxymethyl steroid + reduced [NADPH--hemoprotein reductase] + O2 = a 14alpha-formyl steroid + oxidized [NADPH--hemoprotein reductase] + 2 H2O + H(+). It carries out the reaction a 14alpha-formyl steroid + reduced [NADPH--hemoprotein reductase] + O2 = a Delta(14) steroid + formate + oxidized [NADPH--hemoprotein reductase] + H2O + 2 H(+). The enzyme catalyses lanosterol + 3 reduced [NADPH--hemoprotein reductase] + 3 O2 = 4,4-dimethyl-5alpha-cholesta-8,14,24-trien-3beta-ol + formate + 3 oxidized [NADPH--hemoprotein reductase] + 4 H2O + 4 H(+). It catalyses the reaction lanosterol + reduced [NADPH--hemoprotein reductase] + O2 = 32-hydroxylanosterol + oxidized [NADPH--hemoprotein reductase] + H2O + H(+). The catalysed reaction is 32-hydroxylanosterol + reduced [NADPH--hemoprotein reductase] + O2 = 32-oxolanosterol + oxidized [NADPH--hemoprotein reductase] + 2 H2O + H(+). It carries out the reaction 32-oxolanosterol + reduced [NADPH--hemoprotein reductase] + O2 = 4,4-dimethyl-5alpha-cholesta-8,14,24-trien-3beta-ol + formate + oxidized [NADPH--hemoprotein reductase] + H2O + 2 H(+). The enzyme catalyses eburicol + 3 reduced [NADPH--hemoprotein reductase] + 3 O2 = 14-demethyleburicol + formate + 3 oxidized [NADPH--hemoprotein reductase] + 4 H2O + 4 H(+). It catalyses the reaction eburicol + reduced [NADPH--hemoprotein reductase] + O2 = 32-hydroxyeburicol + oxidized [NADPH--hemoprotein reductase] + H2O + H(+). The catalysed reaction is 32-hydroxyeburicol + reduced [NADPH--hemoprotein reductase] + O2 = 32-oxoeburicol + oxidized [NADPH--hemoprotein reductase] + 2 H2O + H(+). It carries out the reaction 32-oxoeburicol + reduced [NADPH--hemoprotein reductase] + O2 = 14-demethyleburicol + formate + oxidized [NADPH--hemoprotein reductase] + H2O + 2 H(+). The protein operates within steroid metabolism; ergosterol biosynthesis. In terms of biological role, together with cyp51B and cyp51C, encodes the sterol 14alpha-demethylase that plays a critical role in the third module of ergosterol biosynthesis pathway, being ergosterol the major sterol component in fungal membranes that participates in a variety of functions. CYP51A encodes the sterol 14-alpha-demethylase induced on ergosterol depletion and is responsible for the intrinsic variation in azole sensitivity. The third module or late pathway involves the ergosterol synthesis itself through consecutive reactions that mainly occur in the endoplasmic reticulum (ER) membrane. In filamentous fungi, during the initial step of this module, lanosterol (lanosta-8,24-dien-3beta-ol) can be metabolized to eburicol. Sterol 14alpha-demethylase catalyzes the three-step oxidative removal of the 14alpha-methyl group (C-32) of both these sterols in the form of formate, and converts eburicol and lanosterol to 14-demethyleburicol (4,4,24-trimethylergosta-8,14,24(28)-trienol) and 4,4-dimethyl-5alpha-cholesta-8,14,24-trien-3beta-ol, respectively, which are further metabolized by other enzymes in the pathway to ergosterol. Can also use substrates not intrinsic to fungi, such as 24,25-dihydrolanosterol (DHL), producing 4,4'-dimethyl-8,14-cholestadien-3-beta-ol, but at lower rates than the endogenous substrates. This Gibberella zeae (strain ATCC MYA-4620 / CBS 123657 / FGSC 9075 / NRRL 31084 / PH-1) (Wheat head blight fungus) protein is Sterol 14-alpha demethylase CYP51A.